The chain runs to 53 residues: MPITLDPEKLAIVMKHRFQYKICRECGARNPPNAEKCRRCHSKNLRPKKFKKK.

This sequence belongs to the eukaryotic ribosomal protein eL40 family.

This Pyrobaculum arsenaticum (strain DSM 13514 / JCM 11321 / PZ6) protein is Large ribosomal subunit protein eL40.